The primary structure comprises 333 residues: L-lactate dehydrogenase A chain (333 aa).

NAD(+) contacts are provided by residues Gly-30–Lys-58 and Arg-100. 3 residues coordinate substrate: Arg-107, Asn-139, and Arg-170. Asn-139 lines the NAD(+) pocket. His-194 acts as the Proton acceptor in catalysis. Residue Thr-249 participates in substrate binding.

It belongs to the LDH/MDH superfamily. LDH family. In terms of assembly, homotetramer.

The protein localises to the cytoplasm. It carries out the reaction (S)-lactate + NAD(+) = pyruvate + NADH + H(+). It functions in the pathway fermentation; pyruvate fermentation to lactate; (S)-lactate from pyruvate: step 1/1. This is L-lactate dehydrogenase A chain (ldha) from Cyprinus carpio (Common carp).